The following is a 211-amino-acid chain: 3-demethoxyubiquinol 3-hydroxylase (211 aa).

Fe cation contacts are provided by E60, E90, H93, E142, E174, and H177.

This sequence belongs to the COQ7 family. Fe cation is required as a cofactor.

The protein localises to the cell membrane. It catalyses the reaction a 5-methoxy-2-methyl-3-(all-trans-polyprenyl)benzene-1,4-diol + AH2 + O2 = a 3-demethylubiquinol + A + H2O. It functions in the pathway cofactor biosynthesis; ubiquinone biosynthesis. Functionally, catalyzes the hydroxylation of 2-nonaprenyl-3-methyl-6-methoxy-1,4-benzoquinol during ubiquinone biosynthesis. The polypeptide is 3-demethoxyubiquinol 3-hydroxylase (Francisella tularensis subsp. novicida (strain U112)).